Reading from the N-terminus, the 330-residue chain is Alpha/beta hydrolase domain-containing protein VTE7 (330 aa).

Residues 84–315 (VVLLHCFDSS…GHLPHVENPK (232 aa)) form the AB hydrolase-1 domain. Serine 157 (nucleophile) is an active-site residue. Residues aspartate 279 and histidine 307 each act as charge relay system in the active site.

The protein belongs to the AB hydrolase superfamily.

The protein resides in the plastid. It localises to the chloroplast envelope. Functionally, hydrolase involved in tocopherol (vitamin E) biosynthesis. Releases prenyl alcohols from chlorophyll biosynthetic intermediates, which are then converted to the corresponding diphosphates for tocopherol biosynthesis. Provides most of the phytol from chlorophyll for tocopherol biosynthesis in seeds. In Arabidopsis thaliana (Mouse-ear cress), this protein is Alpha/beta hydrolase domain-containing protein VTE7.